A 129-amino-acid chain; its full sequence is uncharacterized protein (129 aa).

This is an uncharacterized protein from Oryza sativa subsp. indica (Rice).